We begin with the raw amino-acid sequence, 275 residues long: 3-methyl-2-oxobutanoate hydroxymethyltransferase (275 aa).

Mg(2+)-binding residues include aspartate 49 and aspartate 88. 3-methyl-2-oxobutanoate-binding positions include 49–50 (DS), aspartate 88, and lysine 118. Mg(2+) is bound at residue glutamate 120. Glutamate 187 functions as the Proton acceptor in the catalytic mechanism.

This sequence belongs to the PanB family. Homodecamer; pentamer of dimers. Mg(2+) is required as a cofactor.

The protein localises to the cytoplasm. It carries out the reaction 3-methyl-2-oxobutanoate + (6R)-5,10-methylene-5,6,7,8-tetrahydrofolate + H2O = 2-dehydropantoate + (6S)-5,6,7,8-tetrahydrofolate. The protein operates within cofactor biosynthesis; (R)-pantothenate biosynthesis; (R)-pantoate from 3-methyl-2-oxobutanoate: step 1/2. Functionally, catalyzes the reversible reaction in which hydroxymethyl group from 5,10-methylenetetrahydrofolate is transferred onto alpha-ketoisovalerate to form ketopantoate. The protein is 3-methyl-2-oxobutanoate hydroxymethyltransferase of Hyphomonas neptunium (strain ATCC 15444).